A 170-amino-acid chain; its full sequence is Opacity-related protein POPM3 (170 aa).

It belongs to the opacity porin family.

The protein resides in the cell outer membrane. In Neisseria meningitidis serogroup C, this protein is Opacity-related protein POPM3 (opr).